Reading from the N-terminus, the 148-residue chain is Azurin (148 aa).

A signal peptide spans 1 to 18 (MRNQLLFALAFIPTIAAA). In terms of domain architecture, Plastocyanin-like spans 19–148 (ASNCEVNVSA…MMRGTVKLVD (130 aa)). Cysteines 22 and 45 form a disulfide. Cu cation is bound by residues His65, Cys131, His136, and Met140.

The protein localises to the periplasm. Its pathway is one-carbon metabolism; methylamine degradation. In terms of biological role, probable electron acceptor for methylamine dehydrogenase. This chain is Azurin (azu), found in Methylobacillus flagellatus (strain ATCC 51484 / DSM 6875 / VKM B-1610 / KT).